Here is a 537-residue protein sequence, read N- to C-terminus: CTP synthase (537 aa).

The tract at residues 1–265 (MVHFIFVTGG…DNKVLKFFNI (265 aa)) is amidoligase domain. Ser13 is a CTP binding site. Ser13 lines the UTP pocket. ATP contacts are provided by residues 14–19 (SLGKGL) and Asp71. Residues Asp71 and Glu139 each contribute to the Mg(2+) site. Residues 146 to 148 (DIE) and Lys222 contribute to the CTP site. Lys222 contacts UTP. The Glutamine amidotransferase type-1 domain maps to 290-536 (RIAIIAKYHK…IKAAIEYNKC (247 aa)). L-glutamine is bound at residue Gly352. Cys379 serves as the catalytic Nucleophile; for glutamine hydrolysis. L-glutamine contacts are provided by residues 380-383 (FGMQ), Glu403, and Arg464. Catalysis depends on residues His509 and Glu511.

The protein belongs to the CTP synthase family. In terms of assembly, homotetramer.

It carries out the reaction UTP + L-glutamine + ATP + H2O = CTP + L-glutamate + ADP + phosphate + 2 H(+). The catalysed reaction is L-glutamine + H2O = L-glutamate + NH4(+). It catalyses the reaction UTP + NH4(+) + ATP = CTP + ADP + phosphate + 2 H(+). It participates in pyrimidine metabolism; CTP biosynthesis via de novo pathway; CTP from UDP: step 2/2. With respect to regulation, allosterically activated by GTP, when glutamine is the substrate; GTP has no effect on the reaction when ammonia is the substrate. The allosteric effector GTP functions by stabilizing the protein conformation that binds the tetrahedral intermediate(s) formed during glutamine hydrolysis. Inhibited by the product CTP, via allosteric rather than competitive inhibition. In terms of biological role, catalyzes the ATP-dependent amination of UTP to CTP with either L-glutamine or ammonia as the source of nitrogen. Regulates intracellular CTP levels through interactions with the four ribonucleotide triphosphates. The chain is CTP synthase from Rickettsia peacockii (strain Rustic).